An 88-amino-acid chain; its full sequence is Large ribosomal subunit protein bL27 (88 aa).

The segment at 1-21 is disordered; it reads MAHKKGASSSRNGRDSNAKRL.

It belongs to the bacterial ribosomal protein bL27 family.

This Thermobifida fusca (strain YX) protein is Large ribosomal subunit protein bL27.